We begin with the raw amino-acid sequence, 186 residues long: TATA box-binding protein-like 1 (186 aa).

This sequence belongs to the TBP family.

Its subcellular location is the cytoplasm. It localises to the nucleus. Its function is as follows. Part of a specialized transcription system that mediates the transcription of most ribosomal proteins through the 5'-TCT-3' motif which is a core promoter element at these genes. Seems to also mediate the transcription of NF1. Does not bind the TATA box. Members of the TBP family are differentially required to regulate transcription and development during early embryogenesis. The protein is TATA box-binding protein-like 1 of Danio rerio (Zebrafish).